Reading from the N-terminus, the 147-residue chain is Hemoglobin subunit delta (147 aa).

The Globin domain maps to 3–147; that stretch reads HLTGEEKAAV…VANALAHKYH (145 aa). Residues His64 and His93 each coordinate heme b.

Belongs to the globin family. As to quaternary structure, heterotetramer of two delta chains and two alpha chains. Red blood cells.

The chain is Hemoglobin subunit delta (HBD) from Ailuropoda melanoleuca (Giant panda).